A 324-amino-acid polypeptide reads, in one-letter code: Tumor necrosis factor receptor superfamily member 6 (324 aa).

The N-terminal stretch at 1 to 21 (MLWIMAVLPLVLAGPELNVRM) is a signal peptide. The Extracellular segment spans residues 22 to 171 (QGTDSIFEGL…CKKQSSNYKL (150 aa)). An N-linked (GlcNAc...) asparagine glycan is attached at Asn-43. TNFR-Cys repeat units lie at residues 43–79 (NCSE…PTCH), 80–123 (PCTE…NTKC), and 124–163 (RCKE…TKCK). 9 cysteine pairs are disulfide-bonded: Cys-44-Cys-55, Cys-56-Cys-69, Cys-59-Cys-78, Cys-81-Cys-97, Cys-100-Cys-115, Cys-103-Cys-123, Cys-125-Cys-139, Cys-142-Cys-154, and Cys-145-Cys-162. N-linked (GlcNAc...) asparagine glycans are attached at residues Asn-114 and Asn-132. Residues 172-188 (LWLLILPGLAILFVFIY) form a helical membrane-spanning segment. The Cytoplasmic segment spans residues 189-324 (KRYRKRQPGD…RNENEGQSLE (136 aa)). The interaction with HIPK3 stretch occupies residues 201–306 (SGIPSPESVP…EEIQAMVWED (106 aa)). Phosphoserine is present on Ser-214. The interaction with CALM stretch occupies residues 219–243 (NKYIWRTAEKMKICDAKKFARQHKI). The 85-residue stretch at 219–303 (NKYIWRTAEK…DIAEEIQAMV (85 aa)) folds into the Death domain.

Component of the death-induced signaling complex (DISC) composed of cell surface receptor FAS/CD95, adapter protein FADD and the CASP8 protease; recruitment of CASP8 to the complex is required for processing of CASP8 into the p18 and p10 subunits. Interacts directly (via DED domain) with NOL3 (via CARD domain); inhibits death-inducing signaling complex (DISC) assembly by inhibiting the increase in FAS-FADD binding induced by FAS activation. Binds DAXX. Interacts with HIPK3. Part of a complex containing HIPK3 and FADD. Binds RIPK1 and FAIM2. Interacts with BABAM2 and FEM1B. Interacts with CALM. In the absence of stimulation, interacts with BIRC2, DDX3X and GSK3B. The interaction with BIRC2 and DDX3X is further enhanced upon receptor stimulation and accompanied by DDX3X and BIRC2 cleavage. Post-translationally, palmitoylated. Palmitoylation by ZDHHC7 prevents the lysosomal degradation of FAS regulating its expression at the plasma membrane.

It localises to the cell membrane. The protein resides in the membrane raft. In terms of biological role, receptor for TNFSF6/FASLG. The adapter molecule FADD recruits caspase CASP8 to the activated receptor. The resulting death-inducing signaling complex (DISC) performs CASP8 proteolytic activation which initiates the subsequent cascade of caspases (aspartate-specific cysteine proteases) mediating apoptosis. FAS-mediated apoptosis may have a role in the induction of peripheral tolerance, in the antigen-stimulated suicide of mature T-cells, or both. In Rattus norvegicus (Rat), this protein is Tumor necrosis factor receptor superfamily member 6 (Fas).